An 80-amino-acid chain; its full sequence is Small, acid-soluble spore protein Tlp (80 aa).

This sequence belongs to the Tlp family.

The protein localises to the spore core. The polypeptide is Small, acid-soluble spore protein Tlp (Bacillus pumilus (strain SAFR-032)).